A 528-amino-acid chain; its full sequence is Na(+)/H(+) antiporter NhaB (528 aa).

11 consecutive transmembrane segments (helical) span residues 23–45 (FAILSFLAINPILFYLNPFIAGW), 66–86 (PGGLLAIEAVIIGMTSPTQVL), 95–115 (VLLLLVFMVAGIYFMKQLLLY), 130–164 (VSMLFCIASAFLSAFLDALTVIAVIITVAVGFYSI), 203–223 (LLMHAGVGTALGGVCTMVGEP), 241–261 (IRMSPVTVPVFFAGILTCFIV), 310–330 (LIVGLAFHLASVGLIGLSVII), 349–369 (EEALPFTALLAVFFAVVGVII), 390–410 (LVIFYIANGLLSMVSDNVFVG), 448–468 (ATPNGQAAFLFLLTSALAPLI), and 475–495 (MVMMALPYTIVLSIVGILAIE).

This sequence belongs to the NhaB Na(+)/H(+) (TC 2.A.34) antiporter family.

Its subcellular location is the cell inner membrane. The enzyme catalyses 2 Na(+)(in) + 3 H(+)(out) = 2 Na(+)(out) + 3 H(+)(in). Functionally, na(+)/H(+) antiporter that extrudes sodium in exchange for external protons. This is Na(+)/H(+) antiporter NhaB from Shewanella amazonensis (strain ATCC BAA-1098 / SB2B).